The sequence spans 967 residues: Sarcosine oxidase subunit alpha (967 aa).

The NAD(+) site is built by A141, D160, E161, R162, S168, V207, A420, and T427. T694 and E786 together coordinate (6R)-5,10-methylene-5,6,7,8-tetrahydrofolate.

Belongs to the GcvT family. Heterotetramer composed of subunits alpha (SoxA), beta (SoxB), gamma (SoxG) and delta (SoxD). Requires NAD(+) as cofactor.

The protein resides in the cytoplasm. It carries out the reaction sarcosine + (6S)-5,6,7,8-tetrahydrofolate + O2 = (6R)-5,10-methylene-5,6,7,8-tetrahydrofolate + glycine + H2O2. It catalyses the reaction sarcosine + O2 + H2O = formaldehyde + glycine + H2O2. Functionally, in the presence of tetrahydrofolate, catalyzes the oxidative demethylation of sarcosine to yield glycine, 5,10-methylenetetrahydrofolate and hydrogen peroxide. In the absence of tetrahydrofolate, catalyzes the oxidative demethylation of sarcosine to yield glycine, formaldehyde and hydrogen peroxide. This chain is Sarcosine oxidase subunit alpha, found in Corynebacterium sp. (strain P-1).